A 238-amino-acid polypeptide reads, in one-letter code: MEEAKIPMLKLGPITFNLTLLAVCIVTIAIVFAFVFWASRQMKLKPEGKQTALEYLISFVDGIGEEHLDHNLQKSYSLLLFTIFLFVAVANNLGLFTKLETVNGYNLWTSPTANLAFDLALSLFITLMVHIEGVRRRGLVAHLKRLATPWPMTPMNLLEEFTNFLSLAIRLFGNIFAGEVVTGLIVQLANYRVYWWPIAFLVNMAWTAFSVFISCIQAFVFTKLTATYLGKKVNESEE.

Transmembrane regions (helical) follow at residues 18 to 38 (LTLL…VFWA), 76 to 96 (YSLL…LGLF), 114 to 134 (NLAF…IEGV), 166 to 186 (SLAI…GLIV), and 193 to 213 (VYWW…SVFI).

This sequence belongs to the ATPase A chain family. F-type ATPases have 2 components, CF(1) - the catalytic core - and CF(0) - the membrane proton channel. CF(1) has five subunits: alpha(3), beta(3), gamma(1), delta(1), epsilon(1). CF(0) has three main subunits: a(1), b(2) and c(9-12). The alpha and beta chains form an alternating ring which encloses part of the gamma chain. CF(1) is attached to CF(0) by a central stalk formed by the gamma and epsilon chains, while a peripheral stalk is formed by the delta and b chains.

Its subcellular location is the cell membrane. Its function is as follows. Key component of the proton channel; it plays a direct role in the translocation of protons across the membrane. The chain is ATP synthase subunit a from Streptococcus pyogenes serotype M1.